The chain runs to 144 residues: Cysteine desulfuration protein SufE (144 aa).

The active-site Cysteine persulfide intermediate is the C51.

This sequence belongs to the SufE family. As to quaternary structure, homodimer. Interacts with SufS.

The protein localises to the cytoplasm. It participates in cofactor biosynthesis; iron-sulfur cluster biosynthesis. In terms of biological role, participates in cysteine desulfuration mediated by SufS. Cysteine desulfuration mobilizes sulfur from L-cysteine to yield L-alanine and constitutes an essential step in sulfur metabolism for biosynthesis of a variety of sulfur-containing biomolecules. Functions as a sulfur acceptor for SufS, by mediating the direct transfer of the sulfur atom from the S-sulfanylcysteine of SufS, an intermediate product of cysteine desulfuration process. This is Cysteine desulfuration protein SufE from Wigglesworthia glossinidia brevipalpis.